Here is a 251-residue protein sequence, read N- to C-terminus: Putative deaminase AgaI (251 aa).

D86 serves as the catalytic Proton acceptor; for enolization step. N154 functions as the For ring-opening step in the catalytic mechanism. H156 (proton acceptor; for ring-opening step) is an active-site residue. E161 serves as the catalytic For ring-opening step.

This sequence belongs to the glucosamine/galactosamine-6-phosphate isomerase family.

The protein is Putative deaminase AgaI (agaI) of Escherichia coli (strain K12).